We begin with the raw amino-acid sequence, 172 residues long: Large ribosomal subunit protein bL21m (172 aa).

The transit peptide at 1 to 20 directs the protein to the mitochondrion; sequence MIRNIGSNLMKSSSSILLRN.

This sequence belongs to the bacterial ribosomal protein bL21 family.

Its subcellular location is the mitochondrion. This Dictyostelium discoideum (Social amoeba) protein is Large ribosomal subunit protein bL21m (mrpl21).